The sequence spans 324 residues: N-acetyl-gamma-glutamyl-phosphate reductase (324 aa).

Cys-131 is a catalytic residue.

It belongs to the NAGSA dehydrogenase family. Type 1 subfamily.

Its subcellular location is the cytoplasm. The enzyme catalyses N-acetyl-L-glutamate 5-semialdehyde + phosphate + NADP(+) = N-acetyl-L-glutamyl 5-phosphate + NADPH + H(+). Its pathway is amino-acid biosynthesis; L-arginine biosynthesis; N(2)-acetyl-L-ornithine from L-glutamate: step 3/4. Catalyzes the NADPH-dependent reduction of N-acetyl-5-glutamyl phosphate to yield N-acetyl-L-glutamate 5-semialdehyde. The protein is N-acetyl-gamma-glutamyl-phosphate reductase of Bradyrhizobium sp. (strain BTAi1 / ATCC BAA-1182).